The sequence spans 634 residues: Chaperone protein HtpG (634 aa).

The tract at residues 1–344 (MNETVANNKE…SNDLPLNVSR (344 aa)) is a; substrate-binding. The tract at residues 345 to 561 (EILQDNKVTQ…DFEMGTQMAK (217 aa)) is b. A c region spans residues 562–634 (LLAAAGQAVP…TAINSLLTKG (73 aa)).

It belongs to the heat shock protein 90 family. As to quaternary structure, homodimer.

It localises to the cytoplasm. Molecular chaperone. Has ATPase activity. This chain is Chaperone protein HtpG, found in Vibrio vulnificus (strain YJ016).